Reading from the N-terminus, the 379-residue chain is Cytochrome b (379 aa).

The next 4 helical transmembrane spans lie at 34–54 (LGSL…FLTM), 78–99 (WLIR…YLHV), 114–134 (WMTG…GYVL), and 179–199 (FYTF…IHLF). The heme b site is built by His-84 and His-98. Positions 183 and 197 each coordinate heme b. Position 202 (His-202) interacts with a ubiquinone. 4 consecutive transmembrane segments (helical) span residues 227–247 (YKDM…CLID), 289–309 (LGGV…PFYN), 321–341 (MNQI…WIGK), and 348–368 (YIMT…FNVH).

This sequence belongs to the cytochrome b family. In terms of assembly, the main subunits of complex b-c1 are: cytochrome b, cytochrome c1 and the Rieske protein. Heme b serves as cofactor.

Its subcellular location is the mitochondrion inner membrane. Component of the ubiquinol-cytochrome c reductase complex (complex III or cytochrome b-c1 complex) that is part of the mitochondrial respiratory chain. The b-c1 complex mediates electron transfer from ubiquinol to cytochrome c. Contributes to the generation of a proton gradient across the mitochondrial membrane that is then used for ATP synthesis. The polypeptide is Cytochrome b (MT-CYB) (Locusta migratoria (Migratory locust)).